Consider the following 63-residue polypeptide: uncharacterized protein (63 aa).

The helical transmembrane segment at 37-57 threads the bilayer; the sequence is IFFPTTFDVLLLAILIFLACA.

It is found in the cell membrane. This is an uncharacterized protein from Bacillus subtilis (strain 168).